A 133-amino-acid polypeptide reads, in one-letter code: Endoribonuclease YbeY (133 aa).

The Zn(2+) site is built by H105, H109, and H115.

It belongs to the endoribonuclease YbeY family. Zn(2+) serves as cofactor.

The protein resides in the cytoplasm. In terms of biological role, single strand-specific metallo-endoribonuclease involved in late-stage 70S ribosome quality control and in maturation of the 3' terminus of the 16S rRNA. This is Endoribonuclease YbeY from Lawsonia intracellularis (strain PHE/MN1-00).